Here is a 96-residue protein sequence, read N- to C-terminus: Cytochrome c2 iso-2 (96 aa).

4 residues coordinate heme c: cysteine 10, cysteine 13, histidine 14, and methionine 75.

This sequence belongs to the cytochrome c family. In terms of processing, binds 1 heme c group covalently per subunit.

Cytochrome c2 is found mainly in purple, non-sulfur, photosynthetic bacteria where it functions as the electron donor to the oxidized bacteriochlorophyll in the photophosphorylation pathway. However, it may also have a role in the respiratory chain and is found in some non-photosynthetic bacteria. The polypeptide is Cytochrome c2 iso-2 (Magnetospirillum fulvum (Rhodospirillum fulvum)).